Here is a 374-residue protein sequence, read N- to C-terminus: (R)-phenyllactyl-CoA dehydratase beta subunit (374 aa).

Belongs to the FldB/FldC dehydratase alpha/beta subunit family. In terms of assembly, part of the heterotrimeric phenyllactate dehydratase complex FldABC, composed of (R)-phenyllactate CoA-transferase (FldA) and a heterodimeric (R)-phenyllactyl-CoA dehydratase (FldB and FldC). [4Fe-4S] cluster serves as cofactor. No flavin could be detected in the FldABC complex, and the addition of FAD, FMN or riboflavin to the dehydratase do not increase enzymatic activity. is required as a cofactor.

The catalysed reaction is (R)-3-phenyllactoyl-CoA = (E)-cinnamoyl-CoA + H2O. It carries out the reaction (R)-3-(4-hydroxyphenyl)lactoyl-CoA = (E)-4-coumaroyl-CoA + H2O. It catalyses the reaction (R)-3-(indol-3-yl)lactoyl-CoA = (E)-3-(indol-3-yl)acryloyl-CoA + H2O. It participates in amino-acid degradation; L-phenylalanine degradation. Component of the phenyllactate dehydratase complex FldABC that is involved in the fermentation of L-phenylalanine via a Stickland reaction. This complex catalyzes the reversible syn-dehydration of (R)-phenyllactate to (E)-cinnamate in two steps, a CoA-transfer from cinnamoyl-CoA to phenyllactate, catalyzed by FldA, followed by the dehydration of phenyllactyl-CoA to cinnamoyl-CoA, catalyzed by FldB and FldC. Requires the activator FldI to initiate catalysis. This is (R)-phenyllactyl-CoA dehydratase beta subunit from Clostridium sporogenes.